Here is a 346-residue protein sequence, read N- to C-terminus: Methylthioribose-1-phosphate isomerase (346 aa).

Residues 46-48 (RGA), Arg89, and Gln196 contribute to the substrate site. The active-site Proton donor is the Asp237. 247–248 (NK) provides a ligand contact to substrate.

Belongs to the eIF-2B alpha/beta/delta subunits family. MtnA subfamily.

The catalysed reaction is 5-(methylsulfanyl)-alpha-D-ribose 1-phosphate = 5-(methylsulfanyl)-D-ribulose 1-phosphate. It participates in amino-acid biosynthesis; L-methionine biosynthesis via salvage pathway; L-methionine from S-methyl-5-thio-alpha-D-ribose 1-phosphate: step 1/6. Functionally, catalyzes the interconversion of methylthioribose-1-phosphate (MTR-1-P) into methylthioribulose-1-phosphate (MTRu-1-P). The sequence is that of Methylthioribose-1-phosphate isomerase from Geobacter sulfurreducens (strain ATCC 51573 / DSM 12127 / PCA).